A 424-amino-acid polypeptide reads, in one-letter code: Anaerobic glycerol-3-phosphate dehydrogenase subunit B (424 aa).

This sequence belongs to the anaerobic G-3-P dehydrogenase subunit B family. As to quaternary structure, composed of a catalytic GlpA/B dimer and of membrane bound GlpC. The cofactor is FMN.

It catalyses the reaction a quinone + sn-glycerol 3-phosphate = dihydroxyacetone phosphate + a quinol. The protein operates within polyol metabolism; glycerol degradation via glycerol kinase pathway; glycerone phosphate from sn-glycerol 3-phosphate (anaerobic route): step 1/1. Conversion of glycerol 3-phosphate to dihydroxyacetone. Uses fumarate or nitrate as electron acceptor. The protein is Anaerobic glycerol-3-phosphate dehydrogenase subunit B of Yersinia enterocolitica serotype O:8 / biotype 1B (strain NCTC 13174 / 8081).